A 357-amino-acid polypeptide reads, in one-letter code: DNA replication and repair protein RecF (357 aa).

ATP is bound at residue Gly30–Thr37.

The protein belongs to the RecF family.

It is found in the cytoplasm. Functionally, the RecF protein is involved in DNA metabolism; it is required for DNA replication and normal SOS inducibility. RecF binds preferentially to single-stranded, linear DNA. It also seems to bind ATP. This chain is DNA replication and repair protein RecF, found in Salmonella heidelberg (strain SL476).